The sequence spans 308 residues: Inosose dehydratase (308 aa).

This sequence belongs to the IolE/MocC family. Glutathione serves as cofactor. Requires Co(2+) as cofactor. The cofactor is Mn(2+).

The enzyme catalyses scyllo-inosose = 3D-3,5/4-trihydroxycyclohexane-1,2-dione + H2O. The protein operates within polyol metabolism; myo-inositol degradation into acetyl-CoA; acetyl-CoA from myo-inositol: step 2/7. In terms of biological role, catalyzes the dehydration of inosose (2-keto-myo-inositol, 2KMI or 2,4,6/3,5-pentahydroxycyclohexanone) to 3D-(3,5/4)-trihydroxycyclohexane-1,2-dione (D-2,3-diketo-4-deoxy-epi-inositol). The sequence is that of Inosose dehydratase from Geobacillus kaustophilus (strain HTA426).